The chain runs to 89 residues: MAITRKNLVAFCFTILFIISSIHCLPTTARSPGYEIGPQRRRRVTCFSFSFCKPARGLASCDLFCKRLKFESGLCTGDLEKCCCIDYIN.

The N-terminal stretch at 1 to 24 (MAITRKNLVAFCFTILFIISSIHC) is a signal peptide. 4 disulfides stabilise this stretch: C46–C84, C52–C75, C61–C82, and C65–C83.

The protein belongs to the DEFL family.

It is found in the secreted. This Arabidopsis thaliana (Mouse-ear cress) protein is Defensin-like protein 103.